The primary structure comprises 46 residues: uncharacterized protein (46 aa).

Residues 1–46 (MNFGIKPDVSSGPRKGGPFKELSDFSKTSPTPQQPRSLSGKSVMLP) are disordered. A compositionally biased stretch (polar residues) spans 25–40 (FSKTSPTPQQPRSLSG).

This is an uncharacterized protein from Dictyostelium discoideum (Social amoeba).